The following is a 258-amino-acid chain: Tropinone reductase-like 3 (258 aa).

19–43 (IVTASTQGIGFAIAYRLGLEGAAVV) serves as a coordination point for NAD(+). Ser150 is a binding site for substrate. Tyr163 acts as the Proton acceptor in catalysis.

Belongs to the short-chain dehydrogenases/reductases (SDR) family.

Has no tropinone reductase activity. This is Tropinone reductase-like 3 from Erythroxylum coca (Coca plant).